Reading from the N-terminus, the 119-residue chain is Large ribosomal subunit protein uL22 (119 aa).

It belongs to the universal ribosomal protein uL22 family. As to quaternary structure, part of the 50S ribosomal subunit.

Its function is as follows. This protein binds specifically to 23S rRNA; its binding is stimulated by other ribosomal proteins, e.g. L4, L17, and L20. It is important during the early stages of 50S assembly. It makes multiple contacts with different domains of the 23S rRNA in the assembled 50S subunit and ribosome. The globular domain of the protein is located near the polypeptide exit tunnel on the outside of the subunit, while an extended beta-hairpin is found that lines the wall of the exit tunnel in the center of the 70S ribosome. The protein is Large ribosomal subunit protein uL22 of Rickettsia prowazekii (strain Madrid E).